A 792-amino-acid chain; its full sequence is 5-methyltetrahydropteroyltriglutamate--homocysteine methyltransferase (792 aa).

5-methyltetrahydropteroyltri-L-glutamate is bound by residues 16–19 and lysine 112; that span reads RELK. L-homocysteine contacts are provided by residues 432–434 and glutamate 485; that span reads IGS. Residues 432 to 434 and glutamate 485 contribute to the L-methionine site; that span reads IGS. 5-methyltetrahydropteroyltri-L-glutamate is bound by residues 516 to 517 and tryptophan 562; that span reads RC. Aspartate 600 is an L-homocysteine binding site. Residue aspartate 600 coordinates L-methionine. Glutamate 606 contacts 5-methyltetrahydropteroyltri-L-glutamate. Zn(2+)-binding residues include histidine 642, cysteine 644, and glutamate 666. Histidine 695 functions as the Proton donor in the catalytic mechanism. Cysteine 727 provides a ligand contact to Zn(2+).

The protein belongs to the vitamin-B12 independent methionine synthase family. Zn(2+) is required as a cofactor.

The catalysed reaction is 5-methyltetrahydropteroyltri-L-glutamate + L-homocysteine = tetrahydropteroyltri-L-glutamate + L-methionine. Its pathway is amino-acid biosynthesis; L-methionine biosynthesis via de novo pathway; L-methionine from L-homocysteine (MetE route): step 1/1. Functionally, catalyzes the transfer of a methyl group from 5-methyltetrahydrofolate to homocysteine resulting in methionine formation. The sequence is that of 5-methyltetrahydropteroyltriglutamate--homocysteine methyltransferase from Cupriavidus necator (Alcaligenes eutrophus).